The chain runs to 217 residues: Nitrile hydratase subunit beta (217 aa).

Belongs to the nitrile hydratase subunit beta family. As to quaternary structure, heterodimer of an alpha and a beta chain.

The catalysed reaction is an aliphatic primary amide = an aliphatic nitrile + H2O. Functionally, NHase catalyzes the hydration of various nitrile compounds to the corresponding amides. This chain is Nitrile hydratase subunit beta (nthB), found in Pseudomonas putida (Arthrobacter siderocapsulatus).